The sequence spans 70 residues: Protein SlyX homolog (70 aa).

This sequence belongs to the SlyX family.

This Shewanella sp. (strain MR-4) protein is Protein SlyX homolog.